A 243-amino-acid polypeptide reads, in one-letter code: Proteasome subunit alpha (243 aa).

The protein belongs to the peptidase T1A family. The 20S proteasome core is composed of 14 alpha and 14 beta subunits that assemble into four stacked heptameric rings, resulting in a barrel-shaped structure. The two inner rings, each composed of seven catalytic beta subunits, are sandwiched by two outer rings, each composed of seven alpha subunits. The catalytic chamber with the active sites is on the inside of the barrel. Has a gated structure, the ends of the cylinder being occluded by the N-termini of the alpha-subunits. Is capped at one or both ends by the proteasome regulatory ATPase, PAN.

Its subcellular location is the cytoplasm. With respect to regulation, the formation of the proteasomal ATPase PAN-20S proteasome complex, via the docking of the C-termini of PAN into the intersubunit pockets in the alpha-rings, triggers opening of the gate for substrate entry. Interconversion between the open-gate and close-gate conformations leads to a dynamic regulation of the 20S proteasome proteolysis activity. In terms of biological role, component of the proteasome core, a large protease complex with broad specificity involved in protein degradation. The protein is Proteasome subunit alpha of Pyrobaculum aerophilum (strain ATCC 51768 / DSM 7523 / JCM 9630 / CIP 104966 / NBRC 100827 / IM2).